Reading from the N-terminus, the 1523-residue chain is Disco-interacting protein 2 homolog A (1523 aa).

The 97-residue stretch at 9 to 105 (EAAPLPAEVL…TSSASEDEGS (97 aa)) folds into the DMAP1-binding domain. The segment at 72–110 (KMPMPSKRRSALVHSSVETYTPPDTSSASEDEGSLRRPG) is disordered. Polar residues predominate over residues 87-99 (SVETYTPPDTSSA). 2 positions are modified to phosphothreonine: threonine 92 and threonine 115. A disordered region spans residues 132–158 (QGSSTSSSASSTSSHPGGRPAAAPSAS). A compositionally biased stretch (low complexity) spans 134–158 (SSTSSSASSTSSHPGGRPAAAPSAS). Short sequence motifs (PXXP motif; required for interaction with CTTN) lie at residues 235–238 (PKRP) and 259–262 (PNQP).

This sequence belongs to the DIP2 family. In terms of assembly, interacts with FSTL1; DIP2A may act as a cell surface receptor for FSTL1. Interacts (via N-terminus) with CTTN (via SH3 domain); the interaction promotes acetylation of CTTN and is required for proper synaptic transmission. Interacts with SHANK3. Detected in heart, liver, spleen, lung, kidney and brain with highest levels in brain (at protein level). In adult cortex, preferentially expressed in excitatory neurons. Broadly expressed in neuronal, reproductive and vascular tissues as well as in heart, kidney, liver and lung with expression detected in neurons, mesenchyme, endothelium, smooth muscle cells and cardiomyocytes. Expressed in ectoderm-derived tissues in the developing embryo. Expressed in the developing nervous system.

It is found in the cell membrane. The protein localises to the mitochondrion. It localises to the cell projection. The protein resides in the dendritic spine. The catalysed reaction is acetate + ATP + CoA = acetyl-CoA + AMP + diphosphate. Catalyzes the de novo synthesis of acetyl-CoA in vitro. Promotes acetylation of CTTN, possibly by providing the acetyl donor, ensuring correct dendritic spine morphology and synaptic transmission. Binds to follistatin-related protein FSTL1 and may act as a cell surface receptor for FSTL1, contributing to AKT activation and subsequent FSTL1-induced survival and function of endothelial cells and cardiac myocytes. The chain is Disco-interacting protein 2 homolog A (Dip2a) from Mus musculus (Mouse).